The chain runs to 642 residues: MIPNGYLMFEDENFIESSVAKLNALRKSGQFCDVRLQVCGHEMLAHRAVLACCSPYLFEIFNSDSDPHGVSHVKLDDLNPEAVEVLLNYAYTAQLKADKELVKDVYSAAKKLKMDRVKQVCGDYLLSRMDVTSCISYRNFASCMGDSRLLNKVDAYIQEHLLQISEEEEFLKLPRLKLEVMLEDNVCLPSNGKLYTKVINWVQRSIWENGDSLEELMEEVQTLYYSADHKLLDGNPLDGQAEVFGSDDDHIQFVQKKPPRENGHKQISGSSTGCLSSPNASMQSPKHEWKIVASEKTSNNTYLCLAVLDSTFCVIFLHGRNSPQSSPTSTPKLSKSLSFEMQPDELLEKPMSPMQYARSGLGTAEMNGKLIAAGGYNREECLRTVECYDPHTDHWSFLAPMRTPRARFQMAVLMGQLYVVGGSNGHSDDLSCGEMYDPNIDDWTPVPELRTNRCNAGVCALNGKLYIVGGSDPYGQKGLKNCDVFDPVTKSWTSCAPLNIRRHQSAVCELGGYLYIIGGAESWNCLNTVERYNPENNTWTLIAPMNVARRGAGVAVLDGKLFVGGGFDGSHAISCVEMYDPTRNEWKMMGNMTSPRSNAGITTVGNTIYAVGGFDGNEFLNTVEVYNPQSNEWSPYTKIFQF.

Residues 32–99 form the BTB domain; it reads CDVRLQVCGH…AYTAQLKADK (68 aa). In terms of domain architecture, BACK spans 134–233; the sequence is CISYRNFASC…YYSADHKLLD (100 aa). Residues Ser-246, Ser-277, Ser-322, Ser-336, and Ser-338 each carry the phosphoserine modification. The segment at 257 to 281 is disordered; sequence KPPRENGHKQISGSSTGCLSSPNAS. The span at 265–281 shows a compositional bias: polar residues; that stretch reads KQISGSSTGCLSSPNAS. Kelch repeat units follow at residues 369 to 415, 416 to 463, 465 to 512, 513 to 559, 561 to 606, and 608 to 642; these read KLIA…VLMG, QLYV…ALNG, LYIV…ELGG, YLYI…VLDG, LFVG…TVGN, and IYAVGGFDGNEFLNTVEVYNPQSNEWSPYTKIFQF.

This sequence belongs to the BTB-kelch protein family. In terms of assembly, homodimer; through the BTB domain. Interacts with AHR/Aryl hydrocarbon receptor. Interacts (via BACK domain) with pre-mRNA-binding protein HNRNPK; the interaction is direct. Interacts (via BACK domain) with splicing factor PTBP1; the interaction is direct. Interacts (via Kelch repeats) with RNA polymerase POLR2A (via C-terminal domain). Interacts (via BACK domain) with splicing factor SNRPA; the interaction is indirect. Interacts (via Kelch repeats) with splicing factor SART1. Interacts (via BACK domain) with ALYREF; the interaction is indirect and likely plays a role in mRNA nuclear export. Interacts (via Kelch repeats) with KLHL20 (via Kelch repeats); this interaction blocks the assembly of Cul3-KLHL20 complex. Ubiquitous expression. In the heart, the highest expression is detected in the ventricles and the lowest in the atria. Expressed in dendrites and spines in neurons.

The protein resides in the cytoplasm. It is found in the cytoskeleton. The protein localises to the nucleus. Its function is as follows. Involved in many cell functions, including pre-mRNA splicing, the aryl hydrocarbon receptor (AHR) pathway, F-actin organization and protein ubiquitination. Plays a role in the dynamic organization of the actin skeleton as a stabilizer of actin filaments by association with F-actin through Kelch repeats. Protects cells from cell death induced by actin destabilization. Functions as a modifier of the AHR/Aryl hydrocarbon receptor pathway increasing the concentration of AHR available to activate transcription. In addition, functions as a negative regulator of BCR(KLHL20) E3 ubiquitin ligase complex to prevent ubiquitin-mediated proteolysis of PML and DAPK1, two tumor suppressors. Inhibits pre-mRNA splicing (in vitro). May play a role in mRNA nuclear export. In terms of biological role, may play a role in cell cycle progression in the nucleus. The sequence is that of Influenza virus NS1A-binding protein homolog from Mus musculus (Mouse).